Reading from the N-terminus, the 71-residue chain is Disintegrin viridin (71 aa).

A Disintegrin domain is found at 1-71; it reads AGEECDCGSP…SADCPRNRFH (71 aa). Cystine bridges form between Cys-5–Cys-20, Cys-7–Cys-15, Cys-14–Cys-37, Cys-28–Cys-34, Cys-33–Cys-58, and Cys-46–Cys-65. Residues 50–52 carry the Cell attachment site motif; the sequence is RGD. A disordered region spans residues 50-71; the sequence is RGDNPDDRCTGQSADCPRNRFH.

This sequence belongs to the venom metalloproteinase (M12B) family. P-II subfamily. P-IIa sub-subfamily. In terms of assembly, monomer (disintegrin). Expressed by the venom gland.

Its subcellular location is the secreted. Inhibits fibrinogen interaction with platelets. Acts by binding to alpha-IIb/beta-3 (ITGA2B/ITGB3) on the platelet surface and inhibits aggregation induced by ADP, thrombin, platelet-activating factor and collagen. This chain is Disintegrin viridin, found in Crotalus viridis viridis (Prairie rattlesnake).